Consider the following 264-residue polypeptide: 3-methyl-2-oxobutanoate hydroxymethyltransferase (264 aa).

Mg(2+) is bound by residues aspartate 45 and aspartate 84. 3-methyl-2-oxobutanoate is bound by residues aspartate 45–serine 46, aspartate 84, and lysine 112. A Mg(2+)-binding site is contributed by glutamate 114. The active-site Proton acceptor is glutamate 181.

This sequence belongs to the PanB family. In terms of assembly, homodecamer; pentamer of dimers. Mg(2+) is required as a cofactor.

The protein localises to the cytoplasm. The enzyme catalyses 3-methyl-2-oxobutanoate + (6R)-5,10-methylene-5,6,7,8-tetrahydrofolate + H2O = 2-dehydropantoate + (6S)-5,6,7,8-tetrahydrofolate. It participates in cofactor biosynthesis; (R)-pantothenate biosynthesis; (R)-pantoate from 3-methyl-2-oxobutanoate: step 1/2. Functionally, catalyzes the reversible reaction in which hydroxymethyl group from 5,10-methylenetetrahydrofolate is transferred onto alpha-ketoisovalerate to form ketopantoate. This is 3-methyl-2-oxobutanoate hydroxymethyltransferase from Shewanella amazonensis (strain ATCC BAA-1098 / SB2B).